Consider the following 258-residue polypeptide: UPF0328 protein ECU02_0090 (258 aa).

The protein belongs to the UPF0328 family.

The chain is UPF0328 protein ECU02_0090 from Encephalitozoon cuniculi (strain GB-M1) (Microsporidian parasite).